A 585-amino-acid polypeptide reads, in one-letter code: MSQATASEITDEGVIESVSGPVVTAVDLDARMNDVVYVGEEGLMGEVIEIEGNLTTIQVYEETSDVAPGEPVENTGEPLSVDLGPGMMDSIYDGVQRPLDVLEEKMGAFLDRGVDAPGIDLEKTWEFNPEVSEGDEVSPGDVVGIVPETESIDHKVLVPPDYEGGEVTAVESGNFTVDETVVELDSGEEIQMRQEWPVREPRPTVEKETPTTPLVSGQRVLDGLFPIAKGGTAAIPGPFGSGKTVTQHQLAKWADADIVVYVGCGERGNEMTEVIEDFPELEDPKTGKPLMSRTCLIANTSNMPVAARESCVYTGITIAEYYRDMGYDVALMADSTSRWAEAMREISSRLEEMPGEEGYPAYLAARLSEFYERAGKFQNMNGSEGSISVIGAVSPPGGDFSEPVTQNTLRIVKCFWALDADLAERRHFPSINWNESYSLYKEQLDPWWRENVHEEFPEVRQWAVDVLDEEDELQEIVQLVGKDALPEDQQLTLEVARYIREAWLQQNAFHDVDTYCEPEKTYQMLTAIQHFNDEAFEALDAGVPVEEIIDVDAVPQLNRMNTQEDYEEYIEELKGDLTDQLRELY.

237 to 244 (GPFGSGKT) contributes to the ATP binding site.

This sequence belongs to the ATPase alpha/beta chains family. As to quaternary structure, has multiple subunits with at least A(3), B(3), C, D, E, F, H, I and proteolipid K(x).

Its subcellular location is the cell membrane. It carries out the reaction ATP + H2O + 4 H(+)(in) = ADP + phosphate + 5 H(+)(out). Component of the A-type ATP synthase that produces ATP from ADP in the presence of a proton gradient across the membrane. The A chain is the catalytic subunit. The chain is A-type ATP synthase subunit A from Natronomonas pharaonis (strain ATCC 35678 / DSM 2160 / CIP 103997 / JCM 8858 / NBRC 14720 / NCIMB 2260 / Gabara) (Halobacterium pharaonis).